A 385-amino-acid chain; its full sequence is Histidinol-phosphate aminotransferase (385 aa).

The residue at position 230 (K230) is an N6-(pyridoxal phosphate)lysine.

The protein belongs to the class-II pyridoxal-phosphate-dependent aminotransferase family. Pyridoxal 5'-phosphate serves as cofactor.

It carries out the reaction L-histidinol phosphate + 2-oxoglutarate = 3-(imidazol-4-yl)-2-oxopropyl phosphate + L-glutamate. It functions in the pathway amino-acid biosynthesis; L-histidine biosynthesis; L-histidine from 5-phospho-alpha-D-ribose 1-diphosphate: step 7/9. The polypeptide is Histidinol-phosphate aminotransferase (Saccharomyces cerevisiae (strain ATCC 204508 / S288c) (Baker's yeast)).